Consider the following 404-residue polypeptide: Beta-ketoacyl-[acyl-carrier-protein] synthase III, chloroplastic (404 aa).

A chloroplast-targeting transit peptide spans 1–43 (MANASGFFTHPSIPNLRSRIHVPVRVSGSGFCVSNRFSKRVLC). Catalysis depends on residues Cys-179, His-330, and Asn-360.

This sequence belongs to the thiolase-like superfamily. FabH family.

Its subcellular location is the plastid. It localises to the chloroplast. The enzyme catalyses malonyl-[ACP] + acetyl-CoA + H(+) = 3-oxobutanoyl-[ACP] + CO2 + CoA. The protein operates within lipid metabolism; fatty acid biosynthesis. Its function is as follows. Catalyzes the condensation reaction of fatty acid synthesis by the addition to an acyl acceptor of two carbons from malonyl-ACP. KAS III catalyzes the first condensation reaction which initiates fatty acid synthesis and may therefore play a role in governing the total rate of fatty acid production. Possesses both acetoacetyl-ACP synthase and acetyl transacylase activities. The polypeptide is Beta-ketoacyl-[acyl-carrier-protein] synthase III, chloroplastic (Arabidopsis thaliana (Mouse-ear cress)).